The chain runs to 636 residues: Chaperone protein DnaK (636 aa).

At threonine 203 the chain carries Phosphothreonine; by autocatalysis. The disordered stretch occupies residues 602-636; it reads VYGKQQEGAPAQEEPSAEGKKADDEGTVEGEFREV. Basic and acidic residues predominate over residues 618-636; it reads AEGKKADDEGTVEGEFREV.

This sequence belongs to the heat shock protein 70 family.

In terms of biological role, acts as a chaperone. This Dehalococcoides mccartyi (strain CBDB1) protein is Chaperone protein DnaK.